The following is a 216-amino-acid chain: Protein-L-isoaspartate O-methyltransferase (216 aa).

The active site involves serine 62.

Belongs to the methyltransferase superfamily. L-isoaspartyl/D-aspartyl protein methyltransferase family.

It localises to the cytoplasm. It carries out the reaction [protein]-L-isoaspartate + S-adenosyl-L-methionine = [protein]-L-isoaspartate alpha-methyl ester + S-adenosyl-L-homocysteine. Functionally, catalyzes the methyl esterification of L-isoaspartyl residues in peptides and proteins that result from spontaneous decomposition of normal L-aspartyl and L-asparaginyl residues. It plays a role in the repair and/or degradation of damaged proteins. This is Protein-L-isoaspartate O-methyltransferase from Methanospirillum hungatei JF-1 (strain ATCC 27890 / DSM 864 / NBRC 100397 / JF-1).